Consider the following 32-residue polypeptide: Ranatuerin-2La (32 aa).

Cys-27 and Cys-32 are disulfide-bonded.

In terms of tissue distribution, expressed by the skin glands.

It localises to the secreted. In terms of biological role, antibacterial activity against Gram-positive bacterium S.aureus and Gram-negative bacterium E.coli. Weak activity against C.albicans. This is Ranatuerin-2La from Rana luteiventris (Columbia spotted frog).